A 706-amino-acid polypeptide reads, in one-letter code: SPX domain-containing membrane protein OsI_32082 (706 aa).

An SPX domain is found at 2 to 145 (VNFSNKLTKD…GYKFTDYYVR (144 aa)). Helical transmembrane passes span 251–271 (MSLVLNLANTFLYMVNTYIVV), 281–301 (LGAAATACGAVIGSMAVAQVF), 318–338 (LLFSSVVLLLGNVMYAMAFDL), 340–359 (SLTILLLGRVLCGMGSARAV), 378–398 (AAFVSASALGMACGPALAGLL), and 414–434 (LPGWIMAFGWLVYLIWLWISF). Positions 475 to 498 (SEQDEEDDNGDEEHNETLSSSTTT) are disordered. The span at 476-488 (EQDEEDDNGDEEH) shows a compositional bias: acidic residues. Transmembrane regions (helical) follow at residues 520-540 (LLIYFMLKYAMEILLAESSVV), 554-574 (VFLAVLGLSVLPVNAIVGTYI), 583-603 (ILVASEMALLAGVMLSFKLTV), 611-631 (VCSAVLTFVSAEVVEGVNLSL), and 678-698 (LLNATLLPALLVCVASIAATL).

This sequence belongs to the major facilitator superfamily.

It is found in the membrane. This Oryza sativa subsp. indica (Rice) protein is SPX domain-containing membrane protein OsI_32082.